We begin with the raw amino-acid sequence, 226 residues long: ATP synthase subunit a (226 aa).

6 helical membrane passes run 18–38 (FITG…SLGA), 76–96 (YFPL…IGII), 105–125 (SWSF…FEGI), 134–154 (FAHF…IEII), 179–199 (LIML…VLFF), and 201–221 (GILQ…GAVL).

It belongs to the ATPase A chain family. As to quaternary structure, F-type ATPases have 2 components, CF(1) - the catalytic core - and CF(0) - the membrane proton channel. CF(1) has five subunits: alpha(3), beta(3), gamma(1), delta(1), epsilon(1). CF(0) has three main subunits: a(1), b(2) and c(9-12). The alpha and beta chains form an alternating ring which encloses part of the gamma chain. CF(1) is attached to CF(0) by a central stalk formed by the gamma and epsilon chains, while a peripheral stalk is formed by the delta and b chains.

The protein localises to the cell inner membrane. Its function is as follows. Key component of the proton channel; it plays a direct role in the translocation of protons across the membrane. This Helicobacter acinonychis (strain Sheeba) protein is ATP synthase subunit a.